A 253-amino-acid polypeptide reads, in one-letter code: uncharacterized protein (253 aa).

The segment covering 1–14 (MKVPILSRLRSLSS) has biased composition (low complexity). Disordered stretches follow at residues 1 to 192 (MKVP…PKSS) and 212 to 253 (PETV…AIQL). Composition is skewed to basic and acidic residues over residues 17–30 (RNNEEKNVDMEHQV) and 45–60 (KSDKNNKHDKHDKSGE). 2 stretches are compositionally biased toward low complexity: residues 63–104 (PSTP…GSDS) and 111–154 (KTLS…QTPR). Over residues 215-235 (VVTSTPRQQSRPPSAQNTPNF) the composition is skewed to polar residues. Low complexity predominate over residues 236–253 (TSQGGSRSTSRRQSAIQL).

This is an uncharacterized protein from Dictyostelium discoideum (Social amoeba).